The sequence spans 490 residues: MIPVVALVGRPNVGKSTLFNRLTRTRDALVADFPGLTRDRKYGRAHLAGYEFIVVDTGGIDGTEEGIETRMAEQSLAAIEEADVVLFLTDARAGLTAADLAIAQHLRSREKTTFVVANKVDGIDADSACAEFWSLGLGEVYQMAAAQGRGVTNMIEYSLAPYAEAMGIVKQEDGDDDEEEREFTEEEAEAEQKRLQDLPIKLAIIGKPNVGKSTLTNRILGEERVVVYDEPGTTRDSIYIPMERQGREYVLIDTAGVRRRSKVHETVEKFSVIKTLKAVEDSNVVLLVIDAREGIAEQDLGLLGFVLNAGRALVIAVNKWDGIDQNVKDRVKTELDRRLGFIDFARIHFISALHGTGVGHLFESIEEAYDSATRRVSTSMLTRIMQMSQDDHQPPLVNGRRVKLKYAHAGGYNPPIVVVHGNQVKKLPDSYKRYMMNYFRRSLKVIGTPIQLRFQEGGNPFEGLNTKKLTVSQERRRKRMVGHIRDKNKD.

EngA-type G domains lie at 3–166 (PVVA…AEAM) and 200–373 (IKLA…DSAT). Residues 9–16 (GRPNVGKS), 56–60 (DTGGI), 118–121 (NKVD), 206–213 (GKPNVGKS), 253–257 (DTAGV), and 318–321 (NKWD) contribute to the GTP site. One can recognise a KH-like domain in the interval 374 to 458 (RRVSTSMLTR…PIQLRFQEGG (85 aa)).

The protein belongs to the TRAFAC class TrmE-Era-EngA-EngB-Septin-like GTPase superfamily. EngA (Der) GTPase family. As to quaternary structure, associates with the 50S ribosomal subunit.

GTPase that plays an essential role in the late steps of ribosome biogenesis. This chain is GTPase Der, found in Shewanella halifaxensis (strain HAW-EB4).